We begin with the raw amino-acid sequence, 200 residues long: Ras-related protein RABF2b (200 aa).

17-25 (GDVGAGKSS) contributes to the GTP binding site. An Effector region motif is present at residues 39 to 47 (QESTIGAAF). Residues 65-69 (DTAGQ), 123-126 (NKSD), and 153-154 (SA) contribute to the GTP site. Residues Cys-198 and Cys-199 are each lipidated (S-geranylgeranyl cysteine).

The protein belongs to the small GTPase superfamily. Rab family. Interacts with VPS9A homodimer. Interacts with TCTP1. Interacts with MON1. Interacts with EREX (via PX domain). Binds to VPS3. As to expression, expressed in roots and actively dividing cells.

It is found in the early endosome membrane. The protein resides in the endosome membrane. It localises to the prevacuolar compartment membrane. The protein localises to the endosome. Its subcellular location is the multivesicular body membrane. It is found in the cell membrane. The protein resides in the cytoplasm. Regulated by guanine nucleotide exchange factors (GEFs) which promote the exchange of bound GDP for free GTP. Functionally, endosomal protein that may be involved in endocytosis. Involved in the trafficking of proteins from prevacuolar compartments (PVCs) to vacuoles. May activate the MON1-CCZ1 complex which acts as guanine nucleotide exchange factors (GEF) for Rab7 protein family, and serves as a link between Rab5 and Rab7 families in PVCs, and mediates PVC maturation. Involved in vacuolar transport of storage proteins with EREX as effector. Regulates membrane trafficking to protein storage vacuoles (PSVs). The chain is Ras-related protein RABF2b from Arabidopsis thaliana (Mouse-ear cress).